A 397-amino-acid chain; its full sequence is Endoglucanase (397 aa).

The active-site Proton donor is the Glu-194. Glu-317 acts as the Nucleophile in catalysis.

This sequence belongs to the glycosyl hydrolase 5 (cellulase A) family.

It carries out the reaction Endohydrolysis of (1-&gt;4)-beta-D-glucosidic linkages in cellulose, lichenin and cereal beta-D-glucans.. This chain is Endoglucanase, found in Paenibacillus polymyxa (Bacillus polymyxa).